The sequence spans 231 residues: Large ribosomal subunit protein uL1 (231 aa).

This sequence belongs to the universal ribosomal protein uL1 family. In terms of assembly, part of the 50S ribosomal subunit.

In terms of biological role, binds directly to 23S rRNA. The L1 stalk is quite mobile in the ribosome, and is involved in E site tRNA release. Protein L1 is also a translational repressor protein, it controls the translation of the L11 operon by binding to its mRNA. The protein is Large ribosomal subunit protein uL1 of Kosmotoga olearia (strain ATCC BAA-1733 / DSM 21960 / TBF 19.5.1).